Here is a 167-residue protein sequence, read N- to C-terminus: NADH-ubiquinone oxidoreductase chain 6 (167 aa).

A run of 4 helical transmembrane segments spans residues 21–41 (SPYYGALATAWLALLAALLLL), 45–65 (IIFPAIILMLIYLGGMLVVFI), 78–98 (PINLTMSALMASFGVMLITMI), and 132–152 (SMFIVAVMILTALLFSILEVV).

The protein belongs to the complex I subunit 6 family.

Its subcellular location is the mitochondrion membrane. It carries out the reaction a ubiquinone + NADH + 5 H(+)(in) = a ubiquinol + NAD(+) + 4 H(+)(out). Its function is as follows. Core subunit of the mitochondrial membrane respiratory chain NADH dehydrogenase (Complex I) that is believed to belong to the minimal assembly required for catalysis. Complex I functions in the transfer of electrons from NADH to the respiratory chain. The immediate electron acceptor for the enzyme is believed to be ubiquinone. The polypeptide is NADH-ubiquinone oxidoreductase chain 6 (ND6) (Branchiostoma floridae (Florida lancelet)).